The primary structure comprises 244 residues: 6-carboxyhexanoate--CoA ligase (244 aa).

It belongs to the BioW family. Homodimer. It depends on Mg(2+) as a cofactor.

The catalysed reaction is heptanedioate + ATP + CoA = 6-carboxyhexanoyl-CoA + AMP + diphosphate. Its pathway is metabolic intermediate metabolism; pimeloyl-CoA biosynthesis; pimeloyl-CoA from pimelate: step 1/1. In terms of biological role, catalyzes the transformation of pimelate into pimeloyl-CoA with concomitant hydrolysis of ATP to AMP. This Methanococcus maripaludis (strain C6 / ATCC BAA-1332) protein is 6-carboxyhexanoate--CoA ligase.